Here is a 165-residue protein sequence, read N- to C-terminus: GTP-dependent dephospho-CoA kinase (165 aa).

GTP contacts are provided by Asp-44, Val-45, Asp-63, Lys-65, Glu-115, and Asp-138.

Belongs to the GTP-dependent DPCK family.

The enzyme catalyses 3'-dephospho-CoA + GTP = GDP + CoA + H(+). It participates in cofactor biosynthesis; coenzyme A biosynthesis. Its function is as follows. Catalyzes the GTP-dependent phosphorylation of the 3'-hydroxyl group of dephosphocoenzyme A to form coenzyme A (CoA). The sequence is that of GTP-dependent dephospho-CoA kinase from Picrophilus torridus (strain ATCC 700027 / DSM 9790 / JCM 10055 / NBRC 100828 / KAW 2/3).